Here is a 156-residue protein sequence, read N- to C-terminus: Cellulose synthase operon protein D (156 aa).

The protein operates within glycan metabolism; bacterial cellulose biosynthesis. Its function is as follows. May have a major role in the perfection of crystallization, involved either in the pore structure itself or in the organization of the pores within the linear array of terminal synthesizing complexes (TCs). The polypeptide is Cellulose synthase operon protein D (bcsDI) (Komagataeibacter xylinus (Gluconacetobacter xylinus)).